Reading from the N-terminus, the 244-residue chain is 1-(5-phosphoribosyl)-5-[(5-phosphoribosylamino)methylideneamino] imidazole-4-carboxamide isomerase (244 aa).

Catalysis depends on aspartate 10, which acts as the Proton acceptor. Aspartate 132 functions as the Proton donor in the catalytic mechanism.

It belongs to the HisA/HisF family.

Its subcellular location is the cytoplasm. The enzyme catalyses 1-(5-phospho-beta-D-ribosyl)-5-[(5-phospho-beta-D-ribosylamino)methylideneamino]imidazole-4-carboxamide = 5-[(5-phospho-1-deoxy-D-ribulos-1-ylimino)methylamino]-1-(5-phospho-beta-D-ribosyl)imidazole-4-carboxamide. It functions in the pathway amino-acid biosynthesis; L-histidine biosynthesis; L-histidine from 5-phospho-alpha-D-ribose 1-diphosphate: step 4/9. This Xanthomonas oryzae pv. oryzae (strain MAFF 311018) protein is 1-(5-phosphoribosyl)-5-[(5-phosphoribosylamino)methylideneamino] imidazole-4-carboxamide isomerase.